Consider the following 196-residue polypeptide: MFASRFKVCRQILENVWQTKKLTLKQKFLISELQKQKKNKKQSDFSIQLQTIKKLSLFYGNLPIKKMQRAKTHTYIDKKNSLLFNIEKRLDVILVRLNFCSTMFQARQLISHKNICVNYKKVNIPGFQVSNGDLISIQENSLDFFKSNIRKNFQTNRIRRMKPNHLEVNYKTLKAVVLYEPQQIQFPYKIDLDLLD.

One can recognise an S4 RNA-binding domain in the interval 88–154; that stretch reads KRLDVILVRL…FKSNIRKNFQ (67 aa).

Belongs to the universal ribosomal protein uS4 family.

It is found in the mitochondrion. This Marchantia polymorpha (Common liverwort) protein is Small ribosomal subunit protein uS4m (RPS4).